The chain runs to 811 residues: TLR4 interactor with leucine rich repeats (811 aa).

The N-terminal stretch at 1-25 (MEGVGAVRFWLVVCGCLAFPPRAES) is a signal peptide. One can recognise an LRRNT domain in the interval 26-57 (VCPERCDCQHPQHLLCTNRGLRAVPKTSSLPS). At 26–696 (VCPERCDCQH…AGGRGGVDYQ (671 aa)) the chain is on the extracellular side. 12 LRR repeats span residues 61–81 (VLTY…DFHR), 84–105 (QLRR…TFEK), 108–129 (RLEE…TLAP), 132–153 (KLRI…SFEG), 156–177 (SLVK…VFAP), 180–201 (NLLY…AFTQ), 204–223 (KLRF…RHAA), 230–251 (SLST…VFQH), 254–275 (RLGL…AFWG), 278–298 (ALRE…TLLE), 302–323 (SLEA…TFGH), and 326–347 (RLRE…IFAA). The N-linked (GlcNAc...) asparagine glycan is linked to Asn73. Residues 359–416 (NGWTCDCRLRGLKRWMGNWHSQGRLLTVFVQCRHPPALRGKYLDYLDDQLLQNGSCVD) enclose the LRRCT domain. N-linked (GlcNAc...) asparagine glycosylation is present at Asn411. Disordered regions lie at residues 414–460 (CVDP…QQRG) and 486–562 (RRGP…QQGR). Polar residues predominate over residues 421-430 (PTAGSRQWPI). Composition is skewed to low complexity over residues 440-460 (PPAG…QQRG) and 494-508 (QSPS…APQS). Positions 510–519 (DLHEKPERGR) are enriched in basic and acidic residues. Residues 524–545 (NLPQTEPTPTSEPASGTPSARD) show a composition bias toward polar residues. Asn589 is a glycosylation site (N-linked (GlcNAc...) asparagine). Residues 697–717 (LLTLVLLAINALLVLLALAAW) traverse the membrane as a helical segment. Over 718-809 (GSRWLRRKLR…RREDHLLQRF (92 aa)) the chain is Cytoplasmic. Phosphoserine is present on Ser798.

As to quaternary structure, belongs to the lipopolysaccharide (LPS) receptor, a multi-protein complex containing at least CD14, MD-2 and TLR4. Interacts with TLR4; this interaction is greatly enhanced following LPS stimulation. Interacts with LPS. N-glycolysaled. In terms of tissue distribution, highly expressed in cortical astrocytes and in cerebellar granule neurons.

It is found in the membrane. Component of the TLR4 signaling complex. Mediates the innate immune response to bacterial lipopolysaccharide (LPS) leading to cytokine secretion and the inflammatory response. The polypeptide is TLR4 interactor with leucine rich repeats (Tril) (Rattus norvegicus (Rat)).